A 265-amino-acid polypeptide reads, in one-letter code: MKSQTTKPLQQSISTNLSSNKEMQVKRLSVEGNIAVGKSTFLRLLSNTFQEWSFATEPLKKWQNIQSTSFQTTTSSKPPMDNLLQLMYDDPKRWSYTFQTFSCMSRFKIQIQPLSEPVLKQQEHVQIFERSVYSDRYIFAKTLYELQHLNEMEWTLYQEWHTFLIQEFSRRVALDGIIYLWATPEKCFERLQRRARKEEKTLQLQYLEKLHDQHESWLTKKTTEVSFENMKNIPVLLLNVEEDFENNSAAGDELNNRVKAFVAGL.

32-40 (GNIAVGKST) lines the ATP pocket. Substrate contacts are provided by Glu57, Tyr88, Gln99, and Arg106. Glu129 serves as the catalytic Proton acceptor. Residues Arg130 and Asp135 each coordinate substrate. 190–194 (RLQRR) contributes to the ATP binding site. Glu199 contributes to the substrate binding site. 242-244 (EDF) contributes to the ATP binding site.

The protein belongs to the DCK/DGK family. Homodimer.

The protein resides in the mitochondrion. The catalysed reaction is 2'-deoxyguanosine + ATP = dGMP + ADP + H(+). Its function is as follows. Phosphorylates deoxyguanosine in the mitochondrial matrix with high efficiency but shows very low activity against other deoxynucleosides. This Xenopus laevis (African clawed frog) protein is Deoxyguanosine kinase, mitochondrial.